A 257-amino-acid polypeptide reads, in one-letter code: Phosphate import ATP-binding protein PstB (257 aa).

The ABC transporter domain occupies 5–246 (LEIKDLTAFY…EVIFTSPKNE (242 aa)). 37–44 (GPSGCGKS) is a binding site for ATP.

It belongs to the ABC transporter superfamily. Phosphate importer (TC 3.A.1.7) family. As to quaternary structure, the complex is composed of two ATP-binding proteins (PstB), two transmembrane proteins (PstC and PstA) and a solute-binding protein (PstS).

The protein localises to the cell membrane. It carries out the reaction phosphate(out) + ATP + H2O = ADP + 2 phosphate(in) + H(+). Part of the ABC transporter complex PstSACB involved in phosphate import. Responsible for energy coupling to the transport system. The polypeptide is Phosphate import ATP-binding protein PstB (Tropheryma whipplei (strain TW08/27) (Whipple's bacillus)).